Here is a 271-residue protein sequence, read N- to C-terminus: Oxamate carbamoyltransferase subunit AllH (271 aa).

This sequence belongs to the AllH family. In terms of assembly, the OXTCase is composed of 3 subunits, AllF, AllG and AllH. It depends on Mg(2+) as a cofactor.

It carries out the reaction oxamate + carbamoyl phosphate = N-carbamoyl-2-oxoglycine + phosphate. Its pathway is nitrogen metabolism; (S)-allantoin degradation. In terms of biological role, component of a carbamoyltransferase involved in the anaerobic nitrogen utilization via the assimilation of allantoin. Catalyzes the conversion of oxalurate (N-carbamoyl-2-oxoglycine) to oxamate and carbamoyl phosphate. This chain is Oxamate carbamoyltransferase subunit AllH, found in Escherichia coli O157:H7.